The following is a 489-amino-acid chain: Transmembrane protein 161A (489 aa).

Positions 1-23 (MAVMGIQMVVTLLVASLMQRVSP) are cleaved as a signal peptide. Over 24-98 (HYSFGRWLLC…INTMDALVLR (75 aa)) the chain is Extracellular. Residue asparagine 34 is glycosylated (N-linked (GlcNAc...) asparagine). The helical transmembrane segment at 99–119 (YFLEYQWFIDFALYSTIIYLF) threads the bilayer. Over 120-134 (TEAYYCVVDAQNEIN) the chain is Cytoplasmic. Residues 135-155 (IGVLWCLMSIIFSIKVLFTVM) traverse the membrane as a helical segment. Residues 156–166 (KHYFRSEEGGE) lie on the Extracellular side of the membrane. Residues 167-187 (RSVCMTFAFFFLLIAMIVTIV) traverse the membrane as a helical segment. Residues 188-224 (RDEYLEFGLEPGLASVCHNLENFLAQQGWQWSMPFVK) lie on the Cytoplasmic side of the membrane. A helical membrane pass occupies residues 225 to 245 (LAFKIALVALCAFLGGCLTFP). Over 246-264 (GLRLAQTHLDALKMAADRP) the chain is Extracellular. The helical transmembrane segment at 265–285 (MLQLLLHMSFLPPVIVVVLWI) threads the bilayer. The Cytoplasmic segment spans residues 286–304 (RPITRDFLLNAPMGKESVE). A helical transmembrane segment spans residues 305–325 (LMSNSAYNTFRLWIIVLLCLL). At 326–370 (RFCLTRFHLQAYLCLADRWVEQMKREAGRISMLEIQRKISRIFCY) the chain is on the extracellular side. A helical membrane pass occupies residues 371–391 (LTVVALQYLAPVILTFHCVFM). Residues 392 to 459 (LKSLGDYSWG…GLFTPLFFRG (68 aa)) lie on the Cytoplasmic side of the membrane. Positions 413-432 (VDSSPVQSHSPTSEEEEDTE) are disordered. Residues 460–480 (IFSFLTWWVSVCQIITSLFGL) traverse the membrane as a helical segment. The Extracellular segment spans residues 481-489 (YFHQYLGAS).

Belongs to the TMEM161 family.

Its subcellular location is the membrane. Its function is as follows. May play a role in protection against oxidative stress. The sequence is that of Transmembrane protein 161A (tmem161a) from Xenopus laevis (African clawed frog).